The following is a 257-amino-acid chain: Flavin-dependent thymidylate synthase (257 aa).

In terms of domain architecture, ThyX spans 1 to 202 (MNVKLVSYTR…PRLFRYVGPN (202 aa)). FAD contacts are provided by residues serine 55, 79-81 (RHR), and glutamine 87. Residues 76 to 79 (QLVR), 87 to 91 (QMSHR), and arginine 141 contribute to the dUMP site. A ThyX motif motif is present at residues 79–89 (RHRVASYTQMS). Residues 157–159 (NAR) and asparagine 163 each bind FAD. A dUMP-binding site is contributed by arginine 168. Arginine 168 acts as the Involved in ionization of N3 of dUMP, leading to its activation in catalysis.

The protein belongs to the thymidylate synthase ThyX family. As to quaternary structure, homotetramer. FAD is required as a cofactor.

It carries out the reaction dUMP + (6R)-5,10-methylene-5,6,7,8-tetrahydrofolate + NADPH + H(+) = dTMP + (6S)-5,6,7,8-tetrahydrofolate + NADP(+). The protein operates within pyrimidine metabolism; dTTP biosynthesis. Catalyzes the reductive methylation of 2'-deoxyuridine-5'-monophosphate (dUMP) to 2'-deoxythymidine-5'-monophosphate (dTMP) while utilizing 5,10-methylenetetrahydrofolate (mTHF) as the methyl donor, and NADPH and FADH(2) as the reductant. The protein is Flavin-dependent thymidylate synthase of Sulfurisphaera tokodaii (strain DSM 16993 / JCM 10545 / NBRC 100140 / 7) (Sulfolobus tokodaii).